A 148-amino-acid polypeptide reads, in one-letter code: Macrodomain Ter protein (148 aa).

Belongs to the MatP family. As to quaternary structure, homodimer.

The protein localises to the cytoplasm. Functionally, required for spatial organization of the terminus region of the chromosome (Ter macrodomain) during the cell cycle. Prevents early segregation of duplicated Ter macrodomains during cell division. Binds specifically to matS, which is a 13 bp signature motif repeated within the Ter macrodomain. The protein is Macrodomain Ter protein of Haemophilus influenzae (strain 86-028NP).